Reading from the N-terminus, the 117-residue chain is Large ribosomal subunit protein bL20 (117 aa).

This sequence belongs to the bacterial ribosomal protein bL20 family.

Functionally, binds directly to 23S ribosomal RNA and is necessary for the in vitro assembly process of the 50S ribosomal subunit. It is not involved in the protein synthesizing functions of that subunit. The protein is Large ribosomal subunit protein bL20 of Limosilactobacillus fermentum (strain NBRC 3956 / LMG 18251) (Lactobacillus fermentum).